The primary structure comprises 197 residues: RNA-binding protein Rsf1 (197 aa).

The RRM domain occupies threonine 7–glycine 80. The tract at residues arginine 74–phenylalanine 197 is disordered. Basic and acidic residues predominate over residues glycine 89 to arginine 102. A Phosphothreonine modification is found at threonine 106. 2 stretches are compositionally biased toward low complexity: residues glutamine 117–glycine 144 and arginine 166–glycine 176. Residues serine 168, serine 171, serine 174, serine 188, and serine 190 each carry the phosphoserine modification.

It belongs to the splicing factor SR family. In terms of processing, extensively phosphorylated on serine residues in the RS domain.

It localises to the nucleus. In terms of biological role, may control important aspects of development. In Drosophila melanogaster (Fruit fly), this protein is RNA-binding protein Rsf1 (Rsf1).